A 79-amino-acid chain; its full sequence is Large ribosomal subunit protein uL24 (79 aa).

This sequence belongs to the universal ribosomal protein uL24 family. As to quaternary structure, part of the 50S ribosomal subunit.

Functionally, one of two assembly initiator proteins, it binds directly to the 5'-end of the 23S rRNA, where it nucleates assembly of the 50S subunit. One of the proteins that surrounds the polypeptide exit tunnel on the outside of the subunit. This Lactobacillus gasseri (strain ATCC 33323 / DSM 20243 / BCRC 14619 / CIP 102991 / JCM 1131 / KCTC 3163 / NCIMB 11718 / NCTC 13722 / AM63) protein is Large ribosomal subunit protein uL24.